The sequence spans 662 residues: Rap guanine nucleotide exchange factor-like 1 (662 aa).

Positions 1 to 149 are disordered; that stretch reads MKPLEKFLKK…PPWAPLGAPE (149 aa). A compositionally biased stretch (gly residues) spans 20-48; it reads VTGGPGGGPGCCGGPGGGGGPGGGGGPAG. 2 stretches are compositionally biased toward low complexity: residues 49 to 65 and 116 to 133; these read GLRPLQRRQSVSRLLLP and SGVPLRSPSSYSSDELSP. Positions 424-660 constitute a Ras-GEF domain; it reads EPEDVANHLT…FELSYKLEAN (237 aa).

In terms of biological role, probable guanine nucleotide exchange factor (GEF). The protein is Rap guanine nucleotide exchange factor-like 1 (Rapgefl1) of Mus musculus (Mouse).